The chain runs to 310 residues: MVSDWKNFCLEKASRFRPTIDRPFFNIYLWDYFNRAVGWATAGRFQPKDFEFTVGKQPLSEPRPVLLFIAMYYVVIFGGRSLVKSCKPLKLRFISQVHNLMLTSVSFLWLILMVEQMLPIVYRHGLYFAVCNVESWTQPMETLYYLNYMTKFVEFADTVLMVLKHRKLTFLHTYHHGATALLCYNQLVGYTAVTWVPVTLNLAVHVLMYWYYFLSASGIRVWWKAWVTRLQIVQFMLDLIVVYYVLYQKIVAAYFKNACTPQCEDCLGSMTAIAAGAAILTSYLFLFISFYIEVYKRGSASGKKKINKNN.

Residues M1–R63 lie on the Lumenal side of the membrane. The chain crosses the membrane as a helical span at residues P64–K84. Residues S85–L100 lie on the Cytoplasmic side of the membrane. Residues M101–V121 traverse the membrane as a helical segment. At Y122–E141 the chain is on the lumenal side. The helical transmembrane segment at T142–L163 threads the bilayer. Over K164–Y174 the chain is Cytoplasmic. The short motif at H172–H176 is the HxxHH motif element. A helical transmembrane segment spans residues H175–V196. The Lumenal portion of the chain corresponds to P197–N201. A helical transmembrane segment spans residues L202–W223. Over K224–Q234 the chain is Cytoplasmic. Residues F235–F255 form a helical membrane-spanning segment. Residues K256 to T271 are Lumenal-facing. A helical transmembrane segment spans residues A272–I292. Topologically, residues E293–N310 are cytoplasmic. A Di-lysine motif motif is present at residues K304–N307.

It belongs to the ELO family.

It is found in the endoplasmic reticulum membrane. The enzyme catalyses a very-long-chain acyl-CoA + malonyl-CoA + H(+) = a very-long-chain 3-oxoacyl-CoA + CO2 + CoA. It carries out the reaction tetradecanoyl-CoA + malonyl-CoA + H(+) = 3-oxohexadecanoyl-CoA + CO2 + CoA. The catalysed reaction is (9Z)-tetradecenoyl-CoA + malonyl-CoA + H(+) = 3-oxo-(11Z)-hexadecenoyl-CoA + CO2 + CoA. Its function is as follows. Component of a microsomal membrane bound medium-chain fatty acid elongation system, which extends medium-chain-length fatty acids to long-chain fatty acids. Component of elongase I, which extends 12-16-carbon fatty acyl-CoAs such as lauroyl-CoA to 14-18-carbon fatty acids by incorporation of malonyl-CoA. The chain is Fatty acid elongase 1 from Saccharomyces cerevisiae (strain ATCC 204508 / S288c) (Baker's yeast).